The following is a 266-amino-acid chain: uncharacterized protein (266 aa).

The first 22 residues, 1–22, serve as a signal peptide directing secretion; it reads MGYFKRVVLYIIVMVVSVFIIG. Residue Cys23 is the site of N-palmitoyl cysteine attachment. The S-diacylglycerol cysteine moiety is linked to residue Cys23.

It belongs to the staphylococcal tandem lipoprotein family.

The protein localises to the cell membrane. This is an uncharacterized protein from Staphylococcus aureus (strain N315).